The primary structure comprises 63 residues: MANPKAKMSKSRRDKRRAQFNARTKAATTVVCPNCGEPTLPHRACRHCGHYRGRAVVTKSANS.

The disordered stretch occupies residues 1 to 22; sequence MANPKAKMSKSRRDKRRAQFNA. A compositionally biased stretch (basic residues) spans 7–18; the sequence is KMSKSRRDKRRA.

It belongs to the bacterial ribosomal protein bL32 family.

In Chlorobium limicola (strain DSM 245 / NBRC 103803 / 6330), this protein is Large ribosomal subunit protein bL32.